The sequence spans 265 residues: Mlc titration factor A (265 aa).

4 residues coordinate Zn(2+): His-111, His-148, His-152, and Glu-211.

The protein belongs to the MtfA family. Interacts with Mlc. Zn(2+) serves as cofactor.

It localises to the cytoplasm. In terms of biological role, involved in the modulation of the activity of the glucose-phosphotransferase system (glucose-PTS). Interacts with the transcriptional repressor Mlc, preventing its interaction with DNA and leading to the modulation of expression of genes regulated by Mlc, including ptsG, which encodes the PTS system glucose-specific EIICB component. Its function is as follows. Shows zinc-dependent metallopeptidase activity. The chain is Mlc titration factor A from Escherichia fergusonii (strain ATCC 35469 / DSM 13698 / CCUG 18766 / IAM 14443 / JCM 21226 / LMG 7866 / NBRC 102419 / NCTC 12128 / CDC 0568-73).